A 437-amino-acid chain; its full sequence is Probable peptidoglycan-N-acetylglucosamine deacetylase ARB_03699 (437 aa).

The signal sequence occupies residues 1–20 (MLMRLYTFFAAALLACCAAA). Residues 47–132 (STRAATTTTT…STSAAAPSTP (86 aa)) form a disordered region. N-linked (GlcNAc...) asparagine glycosylation is present at asparagine 99. The NodB homology domain occupies 149–334 (GTVAITFDDG…EVKRRGLKAV (186 aa)). Residue aspartate 156 is the Proton acceptor of the active site. 3 residues coordinate Zn(2+): aspartate 157, histidine 209, and histidine 213. Tyrosine 251 serves as a coordination point for substrate. Catalysis depends on histidine 308, which acts as the Proton donor. Positions 350 to 370 (TTPVQVPTGTSTTSPTATPTS) are enriched in low complexity. Residues 350–384 (TTPVQVPTGTSTTSPTATPTSPGTPPPAPTQPGVA) are disordered. The LysM domain maps to 389–435 (KWHTVVSGDTCYDIAAANGISLDNLYKWNPAVGTSCASLWLGYAVCV).

Zn(2+) serves as cofactor. Co(2+) is required as a cofactor.

It is found in the secreted. The enzyme catalyses peptidoglycan-N-acetyl-D-glucosamine + H2O = peptidoglycan-D-glucosamine + acetate.. In terms of biological role, catalyzes the deacetylation of N-acetylglucosamine (GlcNAc) residues in peptidoglycan. The chain is Probable peptidoglycan-N-acetylglucosamine deacetylase ARB_03699 from Arthroderma benhamiae (strain ATCC MYA-4681 / CBS 112371) (Trichophyton mentagrophytes).